The following is a 293-amino-acid chain: 4-hydroxy-tetrahydrodipicolinate synthase (293 aa).

A pyruvate-binding site is contributed by T44. The active-site Proton donor/acceptor is Y132. K161 serves as the catalytic Schiff-base intermediate with substrate. Residue I205 participates in pyruvate binding.

Belongs to the DapA family. As to quaternary structure, homotetramer; dimer of dimers.

It localises to the cytoplasm. It catalyses the reaction L-aspartate 4-semialdehyde + pyruvate = (2S,4S)-4-hydroxy-2,3,4,5-tetrahydrodipicolinate + H2O + H(+). It functions in the pathway amino-acid biosynthesis; L-lysine biosynthesis via DAP pathway; (S)-tetrahydrodipicolinate from L-aspartate: step 3/4. Catalyzes the condensation of (S)-aspartate-beta-semialdehyde [(S)-ASA] and pyruvate to 4-hydroxy-tetrahydrodipicolinate (HTPA). In Thermosipho africanus (strain TCF52B), this protein is 4-hydroxy-tetrahydrodipicolinate synthase.